Reading from the N-terminus, the 268-residue chain is Non-homologous end joining protein Ku (268 aa).

Positions 13–175 (VSLVTCPVTM…TLHDGNAVRN (163 aa)) constitute a Ku domain. Positions 174–194 (RNGGHPAARTRPASEAESADS) are disordered.

It belongs to the prokaryotic Ku family. As to quaternary structure, homodimer. Interacts with LigD.

Functionally, with LigD forms a non-homologous end joining (NHEJ) DNA repair enzyme, which repairs dsDNA breaks with reduced fidelity. Binds linear dsDNA with 5'- and 3'- overhangs but not closed circular dsDNA nor ssDNA. Recruits and stimulates the ligase activity of LigD. This is Non-homologous end joining protein Ku from Gluconacetobacter diazotrophicus (strain ATCC 49037 / DSM 5601 / CCUG 37298 / CIP 103539 / LMG 7603 / PAl5).